An 81-amino-acid chain; its full sequence is ATP synthase subunit c, chloroplastic (81 aa).

The next 2 helical transmembrane spans lie at 3–23 (PIIS…ASIG) and 57–77 (LAFM…LLFA).

The protein belongs to the ATPase C chain family. In terms of assembly, F-type ATPases have 2 components, F(1) - the catalytic core - and F(0) - the membrane proton channel. F(1) has five subunits: alpha(3), beta(3), gamma(1), delta(1), epsilon(1). F(0) has four main subunits: a(1), b(1), b'(1) and c(10-14). The alpha and beta chains form an alternating ring which encloses part of the gamma chain. F(1) is attached to F(0) by a central stalk formed by the gamma and epsilon chains, while a peripheral stalk is formed by the delta, b and b' chains.

It localises to the plastid. The protein resides in the chloroplast thylakoid membrane. F(1)F(0) ATP synthase produces ATP from ADP in the presence of a proton or sodium gradient. F-type ATPases consist of two structural domains, F(1) containing the extramembraneous catalytic core and F(0) containing the membrane proton channel, linked together by a central stalk and a peripheral stalk. During catalysis, ATP synthesis in the catalytic domain of F(1) is coupled via a rotary mechanism of the central stalk subunits to proton translocation. Functionally, key component of the F(0) channel; it plays a direct role in translocation across the membrane. A homomeric c-ring of between 10-14 subunits forms the central stalk rotor element with the F(1) delta and epsilon subunits. The polypeptide is ATP synthase subunit c, chloroplastic (Cicer arietinum (Chickpea)).